The sequence spans 1609 residues: Factor-induced gene 2 protein (1609 aa).

The N-terminal stretch at 1 to 22 is a signal peptide; sequence MNSFASLGLIYSVVNLLTRVEA. Asparagine 29 carries an N-linked (GlcNAc...) asparagine glycan. Disordered regions lie at residues 129 to 165, 196 to 243, and 266 to 312; these read SSTL…SSTS, SSEI…EPLS, and TIPT…NYDV. A compositionally biased stretch (polar residues) spans 137-148; it reads QPHRTSHSSSSF. Low complexity predominate over residues 150–165; sequence LPVTAPSSSSLPSSTS. Polar residues predominate over residues 196-212; it reads SSEISGSTSPKSLESFD. Low complexity-rich tracts occupy residues 213–243 and 274–285; these read TTGT…EPLS and TSSLPPTLRSSS. The N-linked (GlcNAc...) asparagine glycan is linked to asparagine 231. Residues 286 to 312 are compositionally biased toward polar residues; that stretch reads MAPTSGSDSISHNFTSPPSKTSGNYDV. N-linked (GlcNAc...) asparagine glycosylation is found at asparagine 298, asparagine 347, asparagine 386, asparagine 426, asparagine 495, asparagine 535, asparagine 661, asparagine 674, and asparagine 713. Residues 846-876 form a disordered region; sequence ATSEATSTSTQVSATSATATASESSTTSQVS. N-linked (GlcNAc...) asparagine glycans are attached at residues asparagine 889, asparagine 907, and asparagine 1079. Residues 1231-1243 show a composition bias toward polar residues; sequence CTQDVPTQSSSPA. The tract at residues 1231–1259 is disordered; the sequence is CTQDVPTQSSSPASTLAYSPSVSTSSSSS. Residues 1244-1259 are compositionally biased toward low complexity; the sequence is STLAYSPSVSTSSSSS. The N-linked (GlcNAc...) asparagine glycan is linked to asparagine 1400. Glycine 1588 carries GPI-anchor amidated glycine lipidation. Residues 1589 to 1609 constitute a propeptide, removed in mature form; the sequence is SASKFLCSKFFMIMVMVINFI.

N-glycosylated.

The protein resides in the secreted. The protein localises to the cell wall. It localises to the membrane. Required for efficient mating. Plays a role in maintenance of cell wall integrity during mating. Important for mating cell projection shape and conjugation bridge diameter. Plays a role in cell fusion and nuclear migration. This chain is Factor-induced gene 2 protein (FIG2), found in Saccharomyces cerevisiae (strain ATCC 204508 / S288c) (Baker's yeast).